Consider the following 517-residue polypeptide: Beclin-1-like protein (517 aa).

Residues 76-106 (LPRHKPPQSQGIPPRPRGASSPQPDATQSGK) form a disordered region. A compositionally biased stretch (polar residues) spans 95–105 (SSPQPDATQSG). A coiled-coil region spans residues 172-266 (CLECMRVLSD…NRFNELEDRY (95 aa)).

This sequence belongs to the beclin family. In terms of assembly, component of a phosphatidylinositol 3-kinase (PI3K) complex composed of ATG6, SH3P2 and FREE1. Interacts with SINAT1, SINAT2, SINAT5, SINAT6, TRAF1A and TRAF1B. Interacts with TUBB8/TUB8. Component of a complex made of VPS38/USL1 and PI3K main subunits such as VPS15, ATG6/VPS30 and VPS34. Binds directly to VPS38/USL1. In terms of processing, ubiquitinated. The interaction with SINAT1 or SINAT2, and the presence of TRAF1A/MUSE14 and TRAF1B/MUSE13, mediates its proteasome-dependent degradation. As to expression, highly expressed in mature pollen grains. Expressed in roots, leaves, stems, flowers and siliques.

It is found in the cytoplasm. The protein resides in the cytoskeleton. Its function is as follows. Required for normal plant development. Required for pollen germination. Required for autophagic activity. Required to limit the pathogen-associated cell death response. May be involved in vacuolar protein sorting. Binds to microtubules. May facilitate efficient recruitment of other ATG proteins to assemble scaffolds for autophagosome biogenesis. The chain is Beclin-1-like protein from Arabidopsis thaliana (Mouse-ear cress).